Consider the following 318-residue polypeptide: MSSHDGLMVFTGNANPALAQEVVKILGIPLGKAMVSRFSDGEIQVEIQENVRGKDVFVLQSTCAPTNDNLMELMIMVDALKRASAGRITAAIPYFGYARQDRRPRSARVAISAKVVANMLEIAGVERIITMDLHADQIQGFFDIPVDNIYATPILLGDLRKQNYPDLLVVSPDVGGVVRARALAKQLNCDLAIIDKRRPKANVAEVMNIIGEVEGRTCVIMDDMVDTAGTLCKAAQVLKERGAKQVFAYATHPVLSGGAADRIAASALDELVVTDTIPLSAESLACPKIRALSSAGLLAETFSRIRRGDSVMSLFAES.

ATP is bound by residues 40-42 (DGE) and 99-100 (RQ). Residues His134 and Asp173 each coordinate Mg(2+). Residue Lys196 is part of the active site. D-ribose 5-phosphate contacts are provided by residues Arg198, Asp222, and 226 to 230 (DTAGT).

It belongs to the ribose-phosphate pyrophosphokinase family. Class I subfamily. In terms of assembly, homohexamer. Requires Mg(2+) as cofactor.

The protein resides in the cytoplasm. The catalysed reaction is D-ribose 5-phosphate + ATP = 5-phospho-alpha-D-ribose 1-diphosphate + AMP + H(+). The protein operates within metabolic intermediate biosynthesis; 5-phospho-alpha-D-ribose 1-diphosphate biosynthesis; 5-phospho-alpha-D-ribose 1-diphosphate from D-ribose 5-phosphate (route I): step 1/1. In terms of biological role, involved in the biosynthesis of the central metabolite phospho-alpha-D-ribosyl-1-pyrophosphate (PRPP) via the transfer of pyrophosphoryl group from ATP to 1-hydroxyl of ribose-5-phosphate (Rib-5-P). The chain is Ribose-phosphate pyrophosphokinase from Burkholderia pseudomallei (strain K96243).